Here is a 122-residue protein sequence, read N- to C-terminus: Guanine nucleotide exchange factor MSS4 homolog (122 aa).

In terms of domain architecture, MSS4 spans 9-120 (EQITDGKNKS…YLALKRVVHK (112 aa)). Zn(2+) contacts are provided by Cys22, Cys25, Cys92, and Cys95.

It belongs to the DSS4/MSS4 family. In terms of assembly, interacts with Rab8.

The protein resides in the basal cell membrane. Its function is as follows. Guanine-nucleotide-releasing protein that acts on members of the sec4/ypt1/rab subfamily such as Rab8. During egg development, essential for establishing and maintaining epithelial cell polarity by regulating the correct polarized deposition of basal membrane (BM) proteins such as trol/Pcan and vkg/Coll IV to the basal surface of follicular epithelial (FE) cells. Likely to function by restricting the activity of the vesicle transport regulator Rab8 to the basal membrane, and thus directs BM protein-containing vesicles to the basal side of the FE cells. This function is independent of the Crag/Rab10 regulation of polarized BM protein secretion in the FE. The protein is Guanine nucleotide exchange factor MSS4 homolog of Drosophila melanogaster (Fruit fly).